The primary structure comprises 259 residues: Adenosylcobinamide-GDP ribazoletransferase (259 aa).

The next 6 membrane-spanning stretches (helical) occupy residues 9–29 (NLFF…WIEV), 43–63 (LVGL…LYWV), 64–84 (SPSI…GGFH), 118–138 (ALAL…LALF), 143–163 (VSLA…SFIF), and 190–210 (ILLA…ALVL).

The protein belongs to the CobS family. Mg(2+) serves as cofactor.

It is found in the cell inner membrane. The enzyme catalyses alpha-ribazole + adenosylcob(III)inamide-GDP = adenosylcob(III)alamin + GMP + H(+). It catalyses the reaction alpha-ribazole 5'-phosphate + adenosylcob(III)inamide-GDP = adenosylcob(III)alamin 5'-phosphate + GMP + H(+). The protein operates within cofactor biosynthesis; adenosylcobalamin biosynthesis; adenosylcobalamin from cob(II)yrinate a,c-diamide: step 7/7. In terms of biological role, joins adenosylcobinamide-GDP and alpha-ribazole to generate adenosylcobalamin (Ado-cobalamin). Also synthesizes adenosylcobalamin 5'-phosphate from adenosylcobinamide-GDP and alpha-ribazole 5'-phosphate. This chain is Adenosylcobinamide-GDP ribazoletransferase, found in Shewanella pealeana (strain ATCC 700345 / ANG-SQ1).